The following is a 137-amino-acid chain: Interferon-induced transmembrane protein 3 (137 aa).

Residues 1 to 57 (MNHTSQAFITAASGGQPPNYERIKEEYEVAEMGAPHGSASVRTTVINMPREVSVPDH) are Cytoplasmic-facing. Tyrosine 20 carries the post-translational modification Phosphotyrosine. Lysine 24 is covalently cross-linked (Glycyl lysine isopeptide (Lys-Gly) (interchain with G-Cter in ubiquitin)). Tyrosine 27 carries the phosphotyrosine modification. The helical intramembrane region spans 58 to 78 (VVWSLFNTLFMNFCCLGFIAY). Residues 60–93 (WSLFNTLFMNFCCLGFIAYAYSVKSRDRKMVGDV) are interaction with SPP1. Residues cysteine 71 and cysteine 72 are each lipidated (S-palmitoyl cysteine). Over 79–109 (AYSVKSRDRKMVGDVTGAQAYASTAKCLNIS) the chain is Cytoplasmic. Residues lysine 83, lysine 88, and lysine 104 each participate in a glycyl lysine isopeptide (Lys-Gly) (interchain with G-Cter in ubiquitin) cross-link. Cysteine 105 carries S-palmitoyl cysteine lipidation. Residues 108 to 133 (ISTLVLSILMVVITIVSVIIIVLNAQ) form an interaction with VAPA region. The chain crosses the membrane as a helical span at residues 110-130 (TLVLSILMVVITIVSVIIIVL). The Extracellular segment spans residues 131-137 (NAQNLHT).

The protein belongs to the CD225/Dispanin family. As to quaternary structure, interacts with ATP6V0B. Interacts with CD81. Interacts with SPP1; the interaction reduces OPN expression. Interacts with BRI3. Polyubiquitinated with both 'Lys-48' and 'Lys-63' linkages. Ubiquitination negatively regulates antiviral activity. Lys-24 is the most prevalent ubiquitination site. In terms of processing, phosphorylation at Tyr-20 is required for endosomal and lysosomal location. In terms of tissue distribution, expressed in acinar cell. Predominantly expressed in nascent primordial germ cells, as well as in gonadal germ cells.

The protein resides in the cell membrane. It localises to the late endosome membrane. The protein localises to the early endosome membrane. Its subcellular location is the lysosome membrane. It is found in the cytoplasm. The protein resides in the perinuclear region. IFN-induced antiviral protein which disrupts intracellular cholesterol homeostasis. Inhibits the entry of viruses to the host cell cytoplasm by preventing viral fusion with cholesterol depleted endosomes. May inactivate new enveloped viruses which buds out of the infected cell, by letting them go out with a cholesterol depleted membrane. Active against multiple viruses, including influenza A virus, SARS coronaviruses (SARS-CoV and SARS-CoV-2), Marburg virus (MARV), Ebola virus (EBOV), Dengue virus (DNV), West Nile virus (WNV), human immunodeficiency virus type 1 (HIV-1), hepatitis C virus (HCV) and vesicular stomatitis virus (VSV). Can inhibit: influenza virus hemagglutinin protein-mediated viral entry, MARV and EBOV GP1,2-mediated viral entry, SARS-CoV and SARS-CoV-2 S protein-mediated viral entry and VSV G protein-mediated viral entry. Plays a critical role in the structural stability and function of vacuolar ATPase (v-ATPase). Establishes physical contact with the v-ATPase of endosomes which is critical for proper clathrin localization and is also required for the function of the v-ATPase to lower the pH in phagocytic endosomes thus establishing an antiviral state. In hepatocytes, IFITM proteins act in a coordinated manner to restrict HCV infection by targeting the endocytosed HCV virion for lysosomal degradation. IFITM2 and IFITM3 display anti-HCV activity that may complement the anti-HCV activity of IFITM1 by inhibiting the late stages of HCV entry, possibly in a coordinated manner by trapping the virion in the endosomal pathway and targeting it for degradation at the lysosome. Exerts opposing activities on SARS-CoV-2, including amphipathicity-dependent restriction of virus at endosomes and amphipathicity-independent enhancement of infection at the plasma membrane. The polypeptide is Interferon-induced transmembrane protein 3 (Mus musculus (Mouse)).